A 323-amino-acid chain; its full sequence is D-alanine--D-alanine ligase (323 aa).

An ATP-grasp domain is found at 102-300 (KQIFRAEGIP…FTELVERMLQ (199 aa)). An ATP-binding site is contributed by 130-185 (VARLGSPLVVKPSNSGSTVGISLARDEVSLAQGLALASSVSSRVFLERYIPGKEIT). Mg(2+)-binding residues include Asp254, Glu267, and Asn269.

It belongs to the D-alanine--D-alanine ligase family. It depends on Mg(2+) as a cofactor. Mn(2+) serves as cofactor.

Its subcellular location is the cytoplasm. The catalysed reaction is 2 D-alanine + ATP = D-alanyl-D-alanine + ADP + phosphate + H(+). The protein operates within cell wall biogenesis; peptidoglycan biosynthesis. Its function is as follows. Cell wall formation. This chain is D-alanine--D-alanine ligase, found in Synechococcus sp. (strain JA-3-3Ab) (Cyanobacteria bacterium Yellowstone A-Prime).